The following is a 172-amino-acid chain: C-phycocyanin beta chain (172 aa).

N4-methylasparagine is present on Asn-72. Residues Cys-82 and Cys-153 each contribute to the (2R,3E)-phycocyanobilin site.

Belongs to the phycobiliprotein family. Heterodimer of an alpha and a beta subunit, which further assembles into trimers and the trimers into hexamers. The basic functional unit of phycobiliproteins is a ring-shaped hexamer formed from two back-to-back trimers contacting via the alpha chain subunits. The trimers are composed of alpha/beta subunit heterodimers arranged around a three-fold axis of symmetry. The phycoerythrins also contain a gamma subunit which is located in the center of the hexamer. Contains two covalently linked bilin chromophores.

The protein resides in the plastid. Its subcellular location is the chloroplast thylakoid membrane. Its function is as follows. Light-harvesting photosynthetic bile pigment-protein from the phycobiliprotein complex (phycobilisome, PBS). Phycocyanin is the major phycobiliprotein in the PBS rod. In Pyropia yezoensis (Susabi-nori), this protein is C-phycocyanin beta chain (cpcB).